The primary structure comprises 181 residues: MGDIFKNNGVLQGRLRAVACAPHCFGPRLRCLHHDQGLTELAWGTWPHSHPVRHQPQMPSARECCSIVCMAAKEVSAPKAPGSPWMVPGDVAMSGHRVGALDERGHPNPQTGHCRGGSVSVTWSSVSCCRGRLAAVRVMIARDPSTCHLAKGCSPAWGFLPQARGPAGTRTPQRRCSSHEA.

The interval 162 to 181 is disordered; it reads QARGPAGTRTPQRRCSSHEA.

This is an uncharacterized protein from Homo sapiens (Human).